We begin with the raw amino-acid sequence, 230 residues long: NAD(P)H-hydrate epimerase (230 aa).

The 208-residue stretch at 11-218 (AIAVDQELFN…ALQRKYELNL (208 aa)) folds into the YjeF N-terminal domain. (6S)-NADPHX is bound at residue 61–65 (NNGGD). Residues asparagine 62 and aspartate 126 each contribute to the K(+) site. (6S)-NADPHX contacts are provided by residues 130–136 (GFSFKPP) and aspartate 159. Serine 162 provides a ligand contact to K(+).

Belongs to the NnrE/AIBP family. K(+) is required as a cofactor.

It catalyses the reaction (6R)-NADHX = (6S)-NADHX. It carries out the reaction (6R)-NADPHX = (6S)-NADPHX. In terms of biological role, catalyzes the epimerization of the S- and R-forms of NAD(P)HX, a damaged form of NAD(P)H that is a result of enzymatic or heat-dependent hydration. This is a prerequisite for the S-specific NAD(P)H-hydrate dehydratase to allow the repair of both epimers of NAD(P)HX. The polypeptide is NAD(P)H-hydrate epimerase (Drosophila melanogaster (Fruit fly)).